The chain runs to 427 residues: Lactadherin (427 aa).

A signal peptide spans 1-18; sequence MPCPRLLAALFCSSGLFA. EGF-like domains follow at residues 20 to 59 and 62 to 106; these read SGDF…LLCN and EHGP…IHCE. Intrachain disulfides connect C24/C35, C29/C47, and C49/C58. O-linked (Fuc...) serine; in PAS-6 glycosylation is present at S27. An O-linked (Fuc...) threonine; in PAS-7 glycan is attached at T34. N59 carries N-linked (GlcNAc...) (hybrid) asparagine; in PAS-6 and PAS-7 glycosylation. 6 disulfides stabilise this stretch: C66-C77, C71-C94, C96-C105, C109-C265, C252-C256, and C270-C427. Positions 85-87 match the Cell attachment site motif; that stretch reads RGD. F5/8 type C domains follow at residues 109–265 and 270–427; these read CTSP…LLGC and CTEP…LLGC. N-linked (GlcNAc...) (high mannose) asparagine; in PAS-6 glycosylation is present at N227.

The two O-linked glycans consist of Gal, GlcNAc and Fuc, with probably Fuc as reducing terminal sugar. In terms of tissue distribution, milk and spermatozoan. Also present in epididymis, kidney, heart, lymphatic gland and spleen but not esophagus, small intestine, muscle and liver.

The protein resides in the membrane. It is found in the secreted. It localises to the cytoplasmic vesicle. Its subcellular location is the secretory vesicle. The protein localises to the acrosome membrane. In terms of biological role, contributes to phagocytic removal of apoptotic cells in many tissues. Plays an important role in the maintenance of intestinal epithelial homeostasis and the promotion of mucosal healing. Promotes VEGF-dependent neovascularization. Specific ligand for the alpha-v/beta-3 and alpha-v/beta-5 receptors. Also binds to phosphatidylserine-enriched cell surfaces in a receptor-independent manner. Zona pellucida-binding protein which may play a role in gamete interaction. In Bos taurus (Bovine), this protein is Lactadherin (MFGE8).